Reading from the N-terminus, the 494-residue chain is GTPase Der (494 aa).

2 consecutive EngA-type G domains span residues 3 to 166 (PVIA…MDAE) and 207 to 380 (IKLA…DCST). GTP contacts are provided by residues 9–16 (GRPNVGKS), 56–60 (DTGGI), 118–121 (NKTD), 213–220 (GRPNVGKS), 260–264 (DTAGV), and 325–328 (NKWD). The KH-like domain occupies 381 to 465 (KRVGTSLLTR…PIRIQFKEGE (85 aa)).

This sequence belongs to the TRAFAC class TrmE-Era-EngA-EngB-Septin-like GTPase superfamily. EngA (Der) GTPase family. As to quaternary structure, associates with the 50S ribosomal subunit.

In terms of biological role, GTPase that plays an essential role in the late steps of ribosome biogenesis. The polypeptide is GTPase Der (Yersinia enterocolitica serotype O:8 / biotype 1B (strain NCTC 13174 / 8081)).